The chain runs to 168 residues: Transcription antitermination protein NusB (168 aa).

The protein belongs to the NusB family.

Functionally, involved in transcription antitermination. Required for transcription of ribosomal RNA (rRNA) genes. Binds specifically to the boxA antiterminator sequence of the ribosomal RNA (rrn) operons. The chain is Transcription antitermination protein NusB from Chlamydia trachomatis serovar L2 (strain ATCC VR-902B / DSM 19102 / 434/Bu).